The following is a 544-amino-acid chain: Chaperonin GroEL (544 aa).

ATP-binding positions include 30–33 (TLGP), lysine 51, 87–91 (DGTTT), glycine 415, 481–483 (DAL), and aspartate 497.

The protein belongs to the chaperonin (HSP60) family. Forms a cylinder of 14 subunits composed of two heptameric rings stacked back-to-back. Interacts with the co-chaperonin GroES.

Its subcellular location is the cytoplasm. The catalysed reaction is ATP + H2O + a folded polypeptide = ADP + phosphate + an unfolded polypeptide.. Together with its co-chaperonin GroES, plays an essential role in assisting protein folding. The GroEL-GroES system forms a nano-cage that allows encapsulation of the non-native substrate proteins and provides a physical environment optimized to promote and accelerate protein folding. The polypeptide is Chaperonin GroEL (Chlamydia muridarum (strain MoPn / Nigg)).